Here is a 614-residue protein sequence, read N- to C-terminus: Aspartate--tRNA ligase (614 aa).

Glutamate 174 serves as a coordination point for L-aspartate. The segment at 198 to 201 (QLFK) is aspartate. Arginine 220 is a binding site for L-aspartate. Residues 220-222 (RDE) and glutamine 229 each bind ATP. Residue histidine 448 coordinates L-aspartate. Glutamate 482 serves as a coordination point for ATP. Residue arginine 489 participates in L-aspartate binding. 534 to 537 (GLDR) provides a ligand contact to ATP. Positions 587–614 (YEDSVKETEQRLEKEAQEDADKNSTWDE) are disordered.

It belongs to the class-II aminoacyl-tRNA synthetase family. Type 1 subfamily. As to quaternary structure, homodimer.

The protein resides in the cytoplasm. It catalyses the reaction tRNA(Asp) + L-aspartate + ATP = L-aspartyl-tRNA(Asp) + AMP + diphosphate. Functionally, catalyzes the attachment of L-aspartate to tRNA(Asp) in a two-step reaction: L-aspartate is first activated by ATP to form Asp-AMP and then transferred to the acceptor end of tRNA(Asp). In Lactobacillus johnsonii (strain CNCM I-12250 / La1 / NCC 533), this protein is Aspartate--tRNA ligase.